The primary structure comprises 361 residues: E3 ubiquitin-protein ligase TM129 (361 aa).

Topologically, residues 1–6 (MDRPDA) are lumenal. Residues 7-27 (TFTLAYVVFALCFVFTPNEFR) traverse the membrane as a helical segment. Residues 28–56 (SAGFTVQHMFSEWLGSEDISFIQHHIRRT) are Cytoplasmic-facing. The helical transmembrane segment at 57–77 (TLTVLFHSFLPLGYYIGMCFA) threads the bilayer. Residues 78 to 94 (APEQNLMYVHHASQGWQ) lie on the Lumenal side of the membrane. The chain crosses the membrane as a helical span at residues 95–115 (MYFGLSLVIQLLSCALAFYWS). Residues 116 to 361 (RRGWANHPIC…FCILDVCPIE (246 aa)) lie on the Cytoplasmic side of the membrane. The RING-type; degenerate zinc finger occupies 285–349 (CIGCMQVNAN…SSRVPCPTCR (65 aa)).

This sequence belongs to the TMEM129 family. In terms of assembly, integral component of ER-resident dislocation complexes.

The protein resides in the endoplasmic reticulum membrane. The enzyme catalyses S-ubiquitinyl-[E2 ubiquitin-conjugating enzyme]-L-cysteine + [acceptor protein]-L-lysine = [E2 ubiquitin-conjugating enzyme]-L-cysteine + N(6)-ubiquitinyl-[acceptor protein]-L-lysine.. It functions in the pathway protein modification; protein ubiquitination. In terms of biological role, E3 ubiquitin-protein ligase involved in ER-associated protein degradation, preferentially associates with the E2 enzyme UBE2J2. The chain is E3 ubiquitin-protein ligase TM129 (tmem129) from Danio rerio (Zebrafish).